Here is a 616-residue protein sequence, read N- to C-terminus: KIF-binding protein (616 aa).

The disordered stretch occupies residues 52–78 (EEEEESEAEGKEERRDGPESGGRRGES). A compositionally biased stretch (basic and acidic residues) spans 59–78 (AEGKEERRDGPESGGRRGES).

This sequence belongs to the KIF-binding protein family.

Its subcellular location is the cytoplasm. It is found in the cytoskeleton. Functionally, activator of KIF1B plus-end-directed microtubule motor activity. Required for organization of axonal microtubules, and axonal outgrowth and maintenance during peripheral and central nervous system development. The protein is KIF-binding protein of Xenopus tropicalis (Western clawed frog).